A 122-amino-acid chain; its full sequence is Large ribosomal subunit protein uL22 (122 aa).

The disordered stretch occupies residues 103-122; sequence VEGKEMKSSKSHKKNQAEGK.

The protein belongs to the universal ribosomal protein uL22 family. In terms of assembly, part of the 50S ribosomal subunit.

In terms of biological role, this protein binds specifically to 23S rRNA; its binding is stimulated by other ribosomal proteins, e.g. L4, L17, and L20. It is important during the early stages of 50S assembly. It makes multiple contacts with different domains of the 23S rRNA in the assembled 50S subunit and ribosome. The globular domain of the protein is located near the polypeptide exit tunnel on the outside of the subunit, while an extended beta-hairpin is found that lines the wall of the exit tunnel in the center of the 70S ribosome. This Helicobacter pylori (strain P12) protein is Large ribosomal subunit protein uL22.